Here is a 237-residue protein sequence, read N- to C-terminus: Ribosomal RNA small subunit methyltransferase G (237 aa).

S-adenosyl-L-methionine-binding positions include glycine 78, phenylalanine 83, 129–130 (AE), and arginine 148. The interval 218–237 (KKETPNKYPRKAGMPNKRPL) is disordered.

It belongs to the methyltransferase superfamily. RNA methyltransferase RsmG family.

Its subcellular location is the cytoplasm. Specifically methylates the N7 position of a guanine in 16S rRNA. The sequence is that of Ribosomal RNA small subunit methyltransferase G from Streptococcus pneumoniae (strain ATCC BAA-255 / R6).